We begin with the raw amino-acid sequence, 129 residues long: MAYPANYRYTREHEWIEIDGKTGTVGITDYAQNSLGDIVFVESPKVGDKIEKGKVFGSVESVKAVSDLYAPVSGTVTAVNEELANAPEKINTDAHTAWIMKIELSDAAEAESLLDATAYEAFVKEETGH.

The Lipoyl-binding domain occupies 22–103; sequence TGTVGITDYA…AHTAWIMKIE (82 aa). Residue K63 is modified to N6-lipoyllysine.

The protein belongs to the GcvH family. As to quaternary structure, the glycine cleavage system is composed of four proteins: P, T, L and H. (R)-lipoate serves as cofactor.

In terms of biological role, the glycine cleavage system catalyzes the degradation of glycine. The H protein shuttles the methylamine group of glycine from the P protein to the T protein. This Acidobacterium capsulatum (strain ATCC 51196 / DSM 11244 / BCRC 80197 / JCM 7670 / NBRC 15755 / NCIMB 13165 / 161) protein is Glycine cleavage system H protein.